A 122-amino-acid chain; its full sequence is Large ribosomal subunit protein uL14 (122 aa).

It belongs to the universal ribosomal protein uL14 family. Part of the 50S ribosomal subunit. Forms a cluster with proteins L3 and L19. In the 70S ribosome, L14 and L19 interact and together make contacts with the 16S rRNA in bridges B5 and B8.

Binds to 23S rRNA. Forms part of two intersubunit bridges in the 70S ribosome. This is Large ribosomal subunit protein uL14 from Exiguobacterium sp. (strain ATCC BAA-1283 / AT1b).